The chain runs to 204 residues: Large ribosomal subunit protein uL4 (204 aa).

A disordered region spans residues 53–74; sequence AYVSGGGKKPWRQKGRGGARAG.

It belongs to the universal ribosomal protein uL4 family. In terms of assembly, part of the 50S ribosomal subunit.

In terms of biological role, one of the primary rRNA binding proteins, this protein initially binds near the 5'-end of the 23S rRNA. It is important during the early stages of 50S assembly. It makes multiple contacts with different domains of the 23S rRNA in the assembled 50S subunit and ribosome. Functionally, forms part of the polypeptide exit tunnel. The chain is Large ribosomal subunit protein uL4 from Campylobacter curvus (strain 525.92).